The following is a 389-amino-acid chain: Lipid-A-disaccharide synthase (389 aa).

It belongs to the LpxB family.

It carries out the reaction a lipid X + a UDP-2-N,3-O-bis[(3R)-3-hydroxyacyl]-alpha-D-glucosamine = a lipid A disaccharide + UDP + H(+). It functions in the pathway bacterial outer membrane biogenesis; LPS lipid A biosynthesis. In terms of biological role, condensation of UDP-2,3-diacylglucosamine and 2,3-diacylglucosamine-1-phosphate to form lipid A disaccharide, a precursor of lipid A, a phosphorylated glycolipid that anchors the lipopolysaccharide to the outer membrane of the cell. This chain is Lipid-A-disaccharide synthase, found in Burkholderia lata (strain ATCC 17760 / DSM 23089 / LMG 22485 / NCIMB 9086 / R18194 / 383).